The following is a 213-amino-acid chain: Oxidase ustYa (213 aa).

The disordered stretch occupies residues 1–26 (MAERSSNGYKEVPVRQSEESTIAEEE). The chain crosses the membrane as a helical span at residues 48-68 (AVWFLIALLLLSNIGLLGGLI). Asparagine 98 carries an N-linked (GlcNAc...) asparagine glycan. 2 consecutive short sequence motifs (HXXHC) follow at residues 123-127 (HQLHC) and 150-154 (HLMHC).

Belongs to the ustYa family.

It localises to the membrane. The protein operates within mycotoxin biosynthesis. Oxidase; part of the gene cluster that mediates the biosynthesis of the secondary metabolite ustiloxin B, an antimitotic tetrapeptide. First, ustA is processed by the subtilisin-like endoprotease Kex2 that is outside the ustiloxin B gene cluster, at the C-terminal side of Arg-Lys, after transfer to Golgi apparatus through the endoplasmic reticulum (ER). Cleavage by KEX2 generates 16 peptides YAIG-I to YAIG-XVI. To process the precursor peptide further, at least two peptidases are necessary to cleave the N-terminal and C-terminal sides of the Tyr-Ala-Ile-Gly core peptide which serves as backbone for the synthesis of ustiloxin B, through cyclization and modification of the tyrosine with a non-protein coding amino acid, norvaline. One of the two peptidases must be the serine peptidase ustP; and the other pepdidase is probably ustH. Macrocyclization of the core peptide derived from ustA requires the tyrosinase ustQ, as well as the homologous oxidases ustYa and ustYb, and leads to the production of the first cyclization product N-desmethylustiloxin F. For the formation of N-desmethylustiloxin F, three oxidation steps are required, hydroxylation at the benzylic position, hydroxylation at either the aromatic ring of Tyr or beta-position of Ile, and oxidative cyclization. UstQ may catalyze the oxidation of a phenol moiety, whereas the ustYa and ustYb are most likely responsible for the remaining two-step oxidations. N-desmethylustiloxin F is then methylated by ustM to yield ustiloxin F which in turn substrate of the cytochrome P450 monooxygenase ustC which catalyzes the formation of S-deoxyustiloxin H. The flavoprotein monooxygenases ustF1 and ustF2 then participate in the modification of the side chain of S-deoxyustiloxin H, leading to the synthesis of an oxime intermediate, via ustiloxin H. Finally, carboxylative dehydration performed by the cysteine desulfurase-like protein ustD yields ustiloxin B. The protein is Oxidase ustYa of Aspergillus flavus (strain ATCC 200026 / FGSC A1120 / IAM 13836 / NRRL 3357 / JCM 12722 / SRRC 167).